A 112-amino-acid chain; its full sequence is UPF0102 protein TTHA0372 (112 aa).

The protein belongs to the UPF0102 family.

The chain is UPF0102 protein TTHA0372 from Thermus thermophilus (strain ATCC 27634 / DSM 579 / HB8).